A 92-amino-acid chain; its full sequence is Elongation factor 1-beta (92 aa).

The protein belongs to the EF-1-beta/EF-1-delta family.

In terms of biological role, promotes the exchange of GDP for GTP in EF-1-alpha/GDP, thus allowing the regeneration of EF-1-alpha/GTP that could then be used to form the ternary complex EF-1-alpha/GTP/AAtRNA. This chain is Elongation factor 1-beta (ef1b), found in Pyrobaculum aerophilum (strain ATCC 51768 / DSM 7523 / JCM 9630 / CIP 104966 / NBRC 100827 / IM2).